We begin with the raw amino-acid sequence, 129 residues long: Small ribosomal subunit protein uS11 (129 aa).

Belongs to the universal ribosomal protein uS11 family. As to quaternary structure, part of the 30S ribosomal subunit. Interacts with proteins S7 and S18. Binds to IF-3.

In terms of biological role, located on the platform of the 30S subunit, it bridges several disparate RNA helices of the 16S rRNA. Forms part of the Shine-Dalgarno cleft in the 70S ribosome. This chain is Small ribosomal subunit protein uS11, found in Cereibacter sphaeroides (strain ATCC 17025 / ATH 2.4.3) (Rhodobacter sphaeroides).